Reading from the N-terminus, the 199-residue chain is Rho-related protein racG (199 aa).

The GTP site is built by Ala13, Gly15, Lys16, Thr17, Cys18, Tyr32, and Thr35. Residue Thr17 participates in Mg(2+) binding. 2 short sequence motifs (switch) span residues 26–37 and 57–75; these read NAFPNEYIPTVF and DTAG…YPST. Thr35 provides a ligand contact to Mg(2+). GTP contacts are provided by Lys116, Asp118, and Ala159. At Cys196 the chain carries Cysteine methyl ester. Cys196 carries the S-geranylgeranyl cysteine lipid modification. Residues 197–199 constitute a propeptide, removed in mature form; that stretch reads SLF.

Belongs to the small GTPase superfamily. Rho family. Requires Mg(2+) as cofactor.

It localises to the cell membrane. The protein localises to the cytoplasm. The protein resides in the cytoskeleton. The enzyme catalyses GTP + H2O = GDP + phosphate + H(+). Its activity is regulated as follows. Regulated by guanine nucleotide exchange factors (GEFs) which promote the exchange of bound GDP for free GTP, GTPase activating proteins (GAPs) which increase the GTP hydrolysis activity, and GDP dissociation inhibitors which inhibit the dissociation of the nucleotide from the GTPase. Its function is as follows. Small GTPase which cycles between active GTP-bound and inactive GDP-bound states. Involved in actin cytoskeleton remodeling during capping of surface receptors and uroid formation. In Entamoeba histolytica (strain ATCC 30459 / HM-1:IMSS / ABRM), this protein is Rho-related protein racG.